The primary structure comprises 144 residues: SsrA-binding protein (144 aa).

Belongs to the SmpB family.

It is found in the cytoplasm. Functionally, required for rescue of stalled ribosomes mediated by trans-translation. Binds to transfer-messenger RNA (tmRNA), required for stable association of tmRNA with ribosomes. tmRNA and SmpB together mimic tRNA shape, replacing the anticodon stem-loop with SmpB. tmRNA is encoded by the ssrA gene; the 2 termini fold to resemble tRNA(Ala) and it encodes a 'tag peptide', a short internal open reading frame. During trans-translation Ala-aminoacylated tmRNA acts like a tRNA, entering the A-site of stalled ribosomes, displacing the stalled mRNA. The ribosome then switches to translate the ORF on the tmRNA; the nascent peptide is terminated with the 'tag peptide' encoded by the tmRNA and targeted for degradation. The ribosome is freed to recommence translation, which seems to be the essential function of trans-translation. The sequence is that of SsrA-binding protein from Thermus thermophilus (strain ATCC BAA-163 / DSM 7039 / HB27).